The chain runs to 854 residues: MAEVEEQGRKLSEESTDESEEEDTEEEPKLKYERLTNGVTEILQKDAASCMTVHDKFLALGTHFGKVFLLDIQGNVTQKFEISSVKINQISLDESGDHVGICSEDGKVQVFGLYTREGFHENFDCPIKVVALHPQFSKSNNKQFVTGGNKLLLYERNWLNRWKTSVLHEGEGNITSVKWRGNLIAWANNVGVKIYDIGSKQRITNVLRDNTSLRPDMYPCSLCWKDNTTLIIGWGCSVKICAVKERDPTEMRDLPSRYVEIVSAFETEFFISGLAPLADQLVTLYYVKENSDHMEEEFRTRPRLDIIQPLPEGCEEISSDALTVRNFQENQCRDYRLEHSEGESLFYIISPKDIVVAKERDQDDHIDWLLEKKKYEEALMAAEISFKNIKRHDVQKIGMAYINHLVEKGDYDTAARKCQKVLGKNMDLWENEVYRFKTIGQLKAISQYLPRGDLRLRPAIYEMILHDFLKTDYEGFATLIREWPGELYNNMAIVQAVNEHLKKDPTNSILLTTLAELYTYDQRYDRALEIYLRLRHKDVYQLIHKHNLFSSIKDKIVLLMDFDKEKAVDMLLDNEDKISMDKVVEELKDRPELLHVYLHKLFKRDHHKGQKYHERQISLYAEFDRPNLLPFLRESMHCPLEKALEICQQRHFVEETVFLLSRMGNCRRALQMIMEELANVDKAIEFAKEQDDRELWEDLISYSIDKPPFITGLLNNIGTHVDPILLIHRIKEGMEIPNLRDSLVKILHDYNLQILLREGCKKILVADSLSLLQRMHRTQKKGVRVDEENICESCHTPILPSDTAQAFGVVVFHCRHMFHKECLPSPGSIPGIQYCNICSAKRRGPGSGILEMKK.

Residues 1 to 13 (MAEVEEQGRKLSE) are compositionally biased toward basic and acidic residues. Residues 1–30 (MAEVEEQGRKLSEESTDESEEEDTEEEPKL) are disordered. Residues 14–26 (ESTDESEEEDTEE) are compositionally biased toward acidic residues. The CHCR repeat unit spans residues 568–712 (VDMLLDNEDK…SIDKPPFITG (145 aa)). Residues 791 to 839 (CESCHTPILPSDTAQAFGVVVFHCRHMFHKECLPSPGSIPGIQYCNICS) form an RING-type; atypical zinc finger.

Belongs to the VPS41 family. Core component of at least two putative endosomal tethering complexes, the homotypic fusion and vacuole protein sorting (HOPS) complex and the class C core vacuole/endosome tethering (CORVET) complex.

It is found in the endosome membrane. Its subcellular location is the late endosome membrane. It localises to the early endosome membrane. The protein localises to the lysosome membrane. The protein resides in the golgi apparatus. It is found in the trans-Golgi network. Its subcellular location is the cytoplasmic vesicle. It localises to the clathrin-coated vesicle. The protein localises to the cytoplasm. The protein resides in the cytosol. Plays a role in vesicle-mediated protein trafficking to lysosomal compartments including the endocytic membrane transport and autophagic pathways. Believed to act as a core component of the putative HOPS and CORVET endosomal tethering complexes. The polypeptide is Vacuolar protein sorting-associated protein 41 homolog (vps41) (Danio rerio (Zebrafish)).